A 516-amino-acid chain; its full sequence is MSDVPGEDSPTHFYPVNFENYLRPKQSIKCQPLQRFKKPNERATNLYRNLKRLKILRWYNRVSKRFEEFPLPKFLGFLQARNDDGLCKRKTGFEIYCEMASIHGFHIFVGAKTWQRILWWLLICNAVLLSFTLVIMSLSMSKETPTIRFIDTMMKPTAEVPFPAVTICGFNTKEWMNSSQIVNQRNASWLELLEDLALPICPQIKICQWDNRMVNCLDQLQPIWTLDQRLCCSFNYNKQLFSSYLGVSFVLRSNDEILQSSKSAGFEVLIHESHEIPNGATPRVFVPGESDAHIMLRPYINRFTKNLKGLSLQKRGCYFSTERRLILSDVYNQINCLAECRTESILKSCGCIPPKSPIEKSWLICDLKQMQCVIDFDHDEIISGEQKNCDCLPPCEFNRYEFQSDIRFIKGMINNSIVNTSNQETTNEVRVRVYYDSAIAEELLLDVYENWLTFIGTFGGITGLFMGCSFVSVFELIFFSCVRPTCNWLTRQQILWRRRRNQRVGITESRSLGPAN.

2 consecutive transmembrane segments (helical) span residues Ile117–Ser137 and Phe454–Phe474.

The protein belongs to the amiloride-sensitive sodium channel (TC 1.A.6) family. In terms of tissue distribution, expressed in embryonic and larval tracheal systems in the dorsal trunk and transverse connective (TC), but not in the junction between the dorsal trunk and TC, and in several tracheal branches and terminal cells. In larvae, also expressed in ventral pits. Expressed in the taste-sensing terminal organ of the larval head. In adult, expressed in hairs on the tibia, femur, tarsi of the leg and wing margin.

Its subcellular location is the membrane. Part of a complex that plays a role in tracheal liquid clearance. In both larvae and adults, contributes to the behavioral response to salt. Probable role in sodium transport. In Drosophila melanogaster (Fruit fly), this protein is Pickpocket protein 11 (ppk11).